Consider the following 484-residue polypeptide: MNILRRGRLGNSIKEDVAKYTTSLSFDKEIFEADILCDIAHVIMLYEQGIIKKEDAKKIIEGLKEIYKKGMENLNLDPSLDDIHMVIESELIKKLGEDVAGRMHTGRSRNDEVATDLRIALREKVLIIAKSLIKMLKDILELAEKHKETLIVGYTHLQHAQPVTFAHHLLSYVSAIERDILRLLDAYKRINISPLGCGAMATTGFKINRERTKELLGFDALIENSMDGVSARDFILETMADLAILGTNLSKICEELILFSTYEFGTIEIANEFCSTSSIMPQKKNPDVAEIARAKLSKLNGNLVTALTILKALPNTYNRDLQEISPHLWDSVYTTIDTIKMVHGMLKTIKINKERMEELAKANYSTATELADTLVRETGIPFRTAHGIVGEVVRRSIEEKKDMIEVIYEVLEKYNLKVDEEKIKKALDPYENVKMRDVIGGPAPEEVEKRIKVFRERLDRYEKEVDEKLQKINKVKEILLSYEI.

This sequence belongs to the lyase 1 family. Argininosuccinate lyase subfamily.

Its subcellular location is the cytoplasm. It carries out the reaction 2-(N(omega)-L-arginino)succinate = fumarate + L-arginine. It participates in amino-acid biosynthesis; L-arginine biosynthesis; L-arginine from L-ornithine and carbamoyl phosphate: step 3/3. The chain is Argininosuccinate lyase from Methanocaldococcus jannaschii (strain ATCC 43067 / DSM 2661 / JAL-1 / JCM 10045 / NBRC 100440) (Methanococcus jannaschii).